Consider the following 435-residue polypeptide: Divergent protein kinase domain 2B (435 aa).

An N-terminal signal peptide occupies residues 1–33 (MESQWRGAAATAFHQHWLARLLLWVSTLSCSFS). N-linked (GlcNAc...) asparagine glycans are attached at residues Asn-102 and Asn-395.

It belongs to the DIPK family.

The protein resides in the secreted. In Mus musculus (Mouse), this protein is Divergent protein kinase domain 2B (Dipk2b).